Consider the following 650-residue polypeptide: Aminopeptidase B (650 aa).

A substrate-binding site is contributed by 298 to 302 (GGMEN). Residue His-325 participates in Zn(2+) binding. The Proton acceptor role is filled by Glu-326. Positions 329 and 348 each coordinate Zn(2+). An N6-acetyllysine modification is found at Lys-446.

It belongs to the peptidase M1 family. Monomer. It depends on Zn(2+) as a cofactor.

It localises to the secreted. The enzyme catalyses Release of N-terminal Arg and Lys from oligopeptides when P1' is not Pro. Also acts on arylamides of Arg and Lys.. Functionally, exopeptidase which selectively removes arginine and/or lysine residues from the N-terminus of several peptide substrates including Arg(0)-Leu-enkephalin, Arg(0)-Met-enkephalin and Arg(-1)-Lys(0)-somatostatin-14. Can hydrolyze leukotriene A4 (LTA-4) into leukotriene B4 (LTB-4). The protein is Aminopeptidase B (Rnpep) of Mus musculus (Mouse).